The sequence spans 293 residues: Probable mediator of RNA polymerase II transcription subunit 15b (293 aa).

Belongs to the plant Mediator complex subunit 15 family. As to quaternary structure, component of the Mediator complex.

The protein localises to the nucleus. In terms of biological role, component of the Mediator complex, a coactivator involved in the regulated transcription of nearly all RNA polymerase II-dependent genes. Mediator functions as a bridge to convey information from gene-specific regulatory proteins to the basal RNA polymerase II transcription machinery. The Mediator complex, having a compact conformation in its free form, is recruited to promoters by direct interactions with regulatory proteins and serves for the assembly of a functional preinitiation complex with RNA polymerase II and the general transcription factors. The protein is Probable mediator of RNA polymerase II transcription subunit 15b (MED15B) of Arabidopsis thaliana (Mouse-ear cress).